The chain runs to 196 residues: MMGPEIERLVGLMARLPGLGPRSARRIVLRLMAEREQRLLPLIAALDAACQRVAVCPVCGGLDSQQPCMICADAAREPLICVVETVADQWALERAAVYRGRYHVLGGLLSAIAGHGPEDLGIDRLVARLDGSVREVILALPATVDGQATAHYLTERLATCGVSVTRLAQGVPVGGSIEILDEGTLALALSARRAAG.

A C4-type zinc finger spans residues 56–71; sequence CPVCGGLDSQQPCMIC. Residues 78 to 172 form the Toprim domain; that stretch reads PLICVVETVA…SVTRLAQGVP (95 aa).

This sequence belongs to the RecR family.

Its function is as follows. May play a role in DNA repair. It seems to be involved in an RecBC-independent recombinational process of DNA repair. It may act with RecF and RecO. The sequence is that of Recombination protein RecR from Acidiphilium cryptum (strain JF-5).